We begin with the raw amino-acid sequence, 289 residues long: ATP synthase gamma chain (289 aa).

It belongs to the ATPase gamma chain family. F-type ATPases have 2 components, CF(1) - the catalytic core - and CF(0) - the membrane proton channel. CF(1) has five subunits: alpha(3), beta(3), gamma(1), delta(1), epsilon(1). CF(0) has three main subunits: a, b and c.

It is found in the cell inner membrane. In terms of biological role, produces ATP from ADP in the presence of a proton gradient across the membrane. The gamma chain is believed to be important in regulating ATPase activity and the flow of protons through the CF(0) complex. The sequence is that of ATP synthase gamma chain from Azorhizobium caulinodans (strain ATCC 43989 / DSM 5975 / JCM 20966 / LMG 6465 / NBRC 14845 / NCIMB 13405 / ORS 571).